The following is a 574-amino-acid chain: 2-succinyl-5-enolpyruvyl-6-hydroxy-3-cyclohexene-1-carboxylate synthase (574 aa).

Belongs to the TPP enzyme family. MenD subfamily. As to quaternary structure, homodimer. It depends on Mg(2+) as a cofactor. Mn(2+) serves as cofactor. The cofactor is thiamine diphosphate.

The enzyme catalyses isochorismate + 2-oxoglutarate + H(+) = 5-enolpyruvoyl-6-hydroxy-2-succinyl-cyclohex-3-ene-1-carboxylate + CO2. It participates in quinol/quinone metabolism; 1,4-dihydroxy-2-naphthoate biosynthesis; 1,4-dihydroxy-2-naphthoate from chorismate: step 2/7. Its pathway is quinol/quinone metabolism; menaquinone biosynthesis. Its function is as follows. Catalyzes the thiamine diphosphate-dependent decarboxylation of 2-oxoglutarate and the subsequent addition of the resulting succinic semialdehyde-thiamine pyrophosphate anion to isochorismate to yield 2-succinyl-5-enolpyruvyl-6-hydroxy-3-cyclohexene-1-carboxylate (SEPHCHC). The chain is 2-succinyl-5-enolpyruvyl-6-hydroxy-3-cyclohexene-1-carboxylate synthase from Vibrio atlanticus (strain LGP32) (Vibrio splendidus (strain Mel32)).